Consider the following 341-residue polypeptide: Holliday junction branch migration complex subunit RuvB (341 aa).

Residues 1–182 (MTSSDPTLRP…FGIPTRLQFY (182 aa)) are large ATPase domain (RuvB-L). Residues Leu21, Arg22, Gly63, Lys66, Thr67, Thr68, 129-131 (EDF), Arg172, Tyr182, and Arg219 contribute to the ATP site. Mg(2+) is bound at residue Thr67. The tract at residues 183 to 253 (TEDELDLIVA…IADRALTRLG (71 aa)) is small ATPAse domain (RuvB-S). The interval 256–341 (HLGLDLGDRR…KGPGQSDLFG (86 aa)) is head domain (RuvB-H). Arg292, Arg311, and Arg316 together coordinate DNA.

The protein belongs to the RuvB family. In terms of assembly, homohexamer. Forms an RuvA(8)-RuvB(12)-Holliday junction (HJ) complex. HJ DNA is sandwiched between 2 RuvA tetramers; dsDNA enters through RuvA and exits via RuvB. An RuvB hexamer assembles on each DNA strand where it exits the tetramer. Each RuvB hexamer is contacted by two RuvA subunits (via domain III) on 2 adjacent RuvB subunits; this complex drives branch migration. In the full resolvosome a probable DNA-RuvA(4)-RuvB(12)-RuvC(2) complex forms which resolves the HJ.

It is found in the cytoplasm. The enzyme catalyses ATP + H2O = ADP + phosphate + H(+). Functionally, the RuvA-RuvB-RuvC complex processes Holliday junction (HJ) DNA during genetic recombination and DNA repair, while the RuvA-RuvB complex plays an important role in the rescue of blocked DNA replication forks via replication fork reversal (RFR). RuvA specifically binds to HJ cruciform DNA, conferring on it an open structure. The RuvB hexamer acts as an ATP-dependent pump, pulling dsDNA into and through the RuvAB complex. RuvB forms 2 homohexamers on either side of HJ DNA bound by 1 or 2 RuvA tetramers; 4 subunits per hexamer contact DNA at a time. Coordinated motions by a converter formed by DNA-disengaged RuvB subunits stimulates ATP hydrolysis and nucleotide exchange. Immobilization of the converter enables RuvB to convert the ATP-contained energy into a lever motion, pulling 2 nucleotides of DNA out of the RuvA tetramer per ATP hydrolyzed, thus driving DNA branch migration. The RuvB motors rotate together with the DNA substrate, which together with the progressing nucleotide cycle form the mechanistic basis for DNA recombination by continuous HJ branch migration. Branch migration allows RuvC to scan DNA until it finds its consensus sequence, where it cleaves and resolves cruciform DNA. In Cereibacter sphaeroides (strain ATCC 17029 / ATH 2.4.9) (Rhodobacter sphaeroides), this protein is Holliday junction branch migration complex subunit RuvB.